A 258-amino-acid chain; its full sequence is Thiazole synthase (258 aa).

Lysine 100 (schiff-base intermediate with DXP) is an active-site residue. 1-deoxy-D-xylulose 5-phosphate-binding positions include glycine 161, 187-188 (AG), and 209-210 (NT).

Belongs to the ThiG family. As to quaternary structure, homotetramer. Forms heterodimers with either ThiH or ThiS.

It localises to the cytoplasm. The catalysed reaction is [ThiS sulfur-carrier protein]-C-terminal-Gly-aminoethanethioate + 2-iminoacetate + 1-deoxy-D-xylulose 5-phosphate = [ThiS sulfur-carrier protein]-C-terminal Gly-Gly + 2-[(2R,5Z)-2-carboxy-4-methylthiazol-5(2H)-ylidene]ethyl phosphate + 2 H2O + H(+). It functions in the pathway cofactor biosynthesis; thiamine diphosphate biosynthesis. Functionally, catalyzes the rearrangement of 1-deoxy-D-xylulose 5-phosphate (DXP) to produce the thiazole phosphate moiety of thiamine. Sulfur is provided by the thiocarboxylate moiety of the carrier protein ThiS. In vitro, sulfur can be provided by H(2)S. The chain is Thiazole synthase from Campylobacter jejuni subsp. doylei (strain ATCC BAA-1458 / RM4099 / 269.97).